Here is a 351-residue protein sequence, read N- to C-terminus: Putative F-box protein At4g09790 (351 aa).

An F-box domain is found at 1-51; that stretch reads MTTICDLPRDLVARILSRVPLTSMRRVRFTCKRWNTISKDPSFAKTHFGKA.

The protein is Putative F-box protein At4g09790 of Arabidopsis thaliana (Mouse-ear cress).